Consider the following 884-residue polypeptide: Microsomal triglyceride transfer protein large subunit (884 aa).

An N-terminal signal peptide occupies residues 1-21; it reads MMPVAGLLLCVTAVLCTSALG. The Vitellogenin domain occupies 26-660; the sequence is LDNGKLYRYS…QSNNALLHGL (635 aa). Residues C172 and C192 are joined by a disulfide bond. N348 carries an N-linked (GlcNAc...) asparagine glycan. C438 and C443 are joined by a disulfide. N-linked (GlcNAc...) asparagine glycosylation occurs at N787.

Heterodimer; heterodimerizes with the protein disulfide isomerase. In terms of tissue distribution, highest expression in the proximal part of the anterior intestine. Lower expression in the distal part of the anterior intestine, in the posterior portion of the intestinal tube and liver. Very low expression levels in heart, brain, ovary, testis and kidney.

It is found in the endoplasmic reticulum. Its subcellular location is the golgi apparatus. It carries out the reaction a 1,2-diacyl-sn-glycero-3-phosphocholine(in) = a 1,2-diacyl-sn-glycero-3-phosphocholine(out). The catalysed reaction is a 1,2-diacyl-sn-glycero-3-phosphoethanolamine(in) = a 1,2-diacyl-sn-glycero-3-phosphoethanolamine(out). It catalyses the reaction a cholesterol ester(in) = a cholesterol ester(out). The enzyme catalyses a triacyl-sn-glycerol(in) = a triacyl-sn-glycerol(out). Its activity is regulated as follows. Inhibited by naringenin. Catalyzes the transport of triglyceride between phospholipid surfaces. Catalyzes the transport of cholesteryl ester, and phospholipid between phospholipid surfaces. Required for the assembly and secretion of plasma lipoproteins that contain apolipoprotein B. Required for yolk lipid utilization and absorption of dietary lipids in larvae. The protein is Microsomal triglyceride transfer protein large subunit of Danio rerio (Zebrafish).